The following is a 138-amino-acid chain: MATQTLNLDVVSAEDKLFSGVVQTVQVTGSEGELGIYPGHAPLLTKIKPGMVRYVSEAGDEELLYVAGGVLEVQPGHVIVLADVAVRGDELDLQEAEAAKKRAEEAIADSGSDVTYAEAIAELSRALAQIDIIRKLKR.

It belongs to the ATPase epsilon chain family. As to quaternary structure, F-type ATPases have 2 components, CF(1) - the catalytic core - and CF(0) - the membrane proton channel. CF(1) has five subunits: alpha(3), beta(3), gamma(1), delta(1), epsilon(1). CF(0) has three main subunits: a, b and c.

Its subcellular location is the cell inner membrane. Its function is as follows. Produces ATP from ADP in the presence of a proton gradient across the membrane. The polypeptide is ATP synthase epsilon chain (Idiomarina loihiensis (strain ATCC BAA-735 / DSM 15497 / L2-TR)).